A 341-amino-acid polypeptide reads, in one-letter code: Biotin synthase (341 aa).

Residues 40–267 enclose the Radical SAM core domain; that stretch reads AEIQVSTLLS…RSMVRLSAGR (228 aa). [4Fe-4S] cluster-binding residues include Cys-55, Cys-59, and Cys-62. Residues Cys-99, Cys-130, Cys-190, and Arg-262 each coordinate [2Fe-2S] cluster.

This sequence belongs to the radical SAM superfamily. Biotin synthase family. As to quaternary structure, homodimer. It depends on [4Fe-4S] cluster as a cofactor. [2Fe-2S] cluster serves as cofactor.

It carries out the reaction (4R,5S)-dethiobiotin + (sulfur carrier)-SH + 2 reduced [2Fe-2S]-[ferredoxin] + 2 S-adenosyl-L-methionine = (sulfur carrier)-H + biotin + 2 5'-deoxyadenosine + 2 L-methionine + 2 oxidized [2Fe-2S]-[ferredoxin]. Its pathway is cofactor biosynthesis; biotin biosynthesis; biotin from 7,8-diaminononanoate: step 2/2. In terms of biological role, catalyzes the conversion of dethiobiotin (DTB) to biotin by the insertion of a sulfur atom into dethiobiotin via a radical-based mechanism. This is Biotin synthase from Xylella fastidiosa (strain 9a5c).